The following is a 306-amino-acid chain: Non-specific ribonucleoside hydrolase RihC (306 aa).

The active site involves H235.

This sequence belongs to the IUNH family. RihC subfamily.

Its function is as follows. Hydrolyzes both purine and pyrimidine ribonucleosides with a broad-substrate specificity. The chain is Non-specific ribonucleoside hydrolase RihC from Salmonella paratyphi C (strain RKS4594).